Here is a 1042-residue protein sequence, read N- to C-terminus: MPISANKYFLLVGVFIGDKMKKEAAKLNEDYVVENAAIQRLKNLGYSYKHGSELTPEYNERESYRDAILKNRFIKAIKNINPWLTEELALKVYKTVTNIDNPDFNMRGKIFYEMLINGVKLEFKENGEKKTRFVKLIDFENINKNEFLVANQFEVEYYYENGRFRRPDLVVFINGIPIAIFEFKSPKSNQTAKDAFNDHKTKMKDIPQLYQYAQILVVSDGLETKYGSPTSDWDRFFVWEGVESDDDVEVIEVDNYGNTMYKYKGNPYTSLDILLMGLFKKEHLIEFLEDFIIHDKKKIIATYYQFYTVKKAVDRTIKSVLYGETPEDRRIGIVWHAQGTGKSITMLFYAKKALKQKELNYPLLVFLTDRLELDEQLYNVFSSVFSEAERAESIAELQELIKKTPGGIIFATIQKFGRKSKDEHYPFLTDRNNIIIIADEAHRSHYGTLAQNLRKAIPNASFLAFTATPIDYKDRSTFLVFGDYISAYPIDKAKRHGVVVPIYYEARLVELHLTNEFIDLEFDEISERVANDPETKESIKEVFAKLEKIMLTEDYLSKVSKDIIEHFNKRLQDFDGKAMVVTISRKVAVELYKWITKQPNAPKIAVVMSGNKSKDPEDFHPHIRTKKELENLAKEFKDPESDLKMVIVVDMWLTGFDVPCLHTMYFLKPMKNHSLAQAIARVNRVFKDKPGGLIVDYIGIADDLSKSLSKYSSEARKDLMTDIKVVIEEMKRRYEKVTSYFKNINYKDWKKLSSEDLSLLTVKAYQRVAKDDNTKKEFVRNVIALKKLYLLARPHPETIGIKDDLEFFEMIKKMIVKYSTKKIREISQDLENDIQSLISKSISAKELVDVFEMLKKEKPELSVLSDEFLSEIAKIEYKDYVRDVLIKILNDDIRVRMAKNPIRFKKFSERLNEVIEKYRIKVITTAEMIEELVNLAKEIRKAAEEGKELGLTEEELAFYDLLLSYPNIPLTDKKRVEKIAKEIARMMSGYIKARDWKKKKNLQSKIRAKLKIILMKEGIKDYSLINKISDDLFEYAKNIYAI.

The Helicase ATP-binding domain maps to 323–487 (GETPEDRRIG…FLVFGDYISA (165 aa)). Positions 439–442 (DEAH) match the DEAH box motif. Residues 551-731 (LTEDYLSKVS…DIKVVIEEMK (181 aa)) form the Helicase C-terminal domain.

This sequence belongs to the HsdR family. As to quaternary structure, the type I restriction/modification system is composed of three polypeptides R, M and S.

The enzyme catalyses Endonucleolytic cleavage of DNA to give random double-stranded fragments with terminal 5'-phosphates, ATP is simultaneously hydrolyzed.. In terms of biological role, the restriction (R) subunit of a type I restriction enzyme that recognizes 5'-CCAN(5)GTR-3' and cleaves a random distance away. The R subunit is required for both nuclease and ATPase activities, but not for modification. After locating a non-methylated recognition site, the enzyme complex serves as a molecular motor that translocates DNA in an ATP-dependent manner until a collision occurs that triggers cleavage. This is Putative type I restriction enzyme MjaIXP endonuclease subunit from Methanocaldococcus jannaschii (strain ATCC 43067 / DSM 2661 / JAL-1 / JCM 10045 / NBRC 100440) (Methanococcus jannaschii).